A 69-amino-acid chain; its full sequence is DNA-directed RNA polymerase subunit omega (69 aa).

Belongs to the RNA polymerase subunit omega family. As to quaternary structure, the RNAP catalytic core consists of 2 alpha, 1 beta, 1 beta' and 1 omega subunit. When a sigma factor is associated with the core the holoenzyme is formed, which can initiate transcription.

The catalysed reaction is RNA(n) + a ribonucleoside 5'-triphosphate = RNA(n+1) + diphosphate. In terms of biological role, promotes RNA polymerase assembly. Latches the N- and C-terminal regions of the beta' subunit thereby facilitating its interaction with the beta and alpha subunits. This is DNA-directed RNA polymerase subunit omega from Geobacter metallireducens (strain ATCC 53774 / DSM 7210 / GS-15).